A 301-amino-acid chain; its full sequence is Probable alpha-L-glutamate ligase (301 aa).

The ATP-grasp domain occupies 104–287 (LQLLSRKGIG…IAGIIIQYLE (184 aa)). Residues K141, 178–179 (EY), D187, and 211–213 (RSN) each bind ATP. D248, E260, and N262 together coordinate Mg(2+). D248, E260, and N262 together coordinate Mn(2+).

The protein belongs to the RimK family. It depends on Mg(2+) as a cofactor. Requires Mn(2+) as cofactor.

In Pseudomonas aeruginosa (strain UCBPP-PA14), this protein is Probable alpha-L-glutamate ligase.